The chain runs to 104 residues: Large ribosomal subunit protein uL24 (104 aa).

Belongs to the universal ribosomal protein uL24 family. As to quaternary structure, part of the 50S ribosomal subunit.

In terms of biological role, one of two assembly initiator proteins, it binds directly to the 5'-end of the 23S rRNA, where it nucleates assembly of the 50S subunit. Its function is as follows. One of the proteins that surrounds the polypeptide exit tunnel on the outside of the subunit. The polypeptide is Large ribosomal subunit protein uL24 (Nitrobacter winogradskyi (strain ATCC 25391 / DSM 10237 / CIP 104748 / NCIMB 11846 / Nb-255)).